We begin with the raw amino-acid sequence, 134 residues long: RFDSRGFPSLHPIDVNGSLFWHQNQRDFPKCRNNSAPLTQMGGRRVRWEVYISRARLVNRQIAWRRHPRCFDLHRRHRDRSSLRGRERCIGTRIPRAKSDVSTAYRVYRPTPLASYACYTVFGLGSIHPRFLML.

This is an uncharacterized protein from Human cytomegalovirus (strain AD169) (HHV-5).